The primary structure comprises 582 residues: ATP-dependent lipid A-core flippase (582 aa).

5 helical membrane passes run Leu-16 to Leu-36, Leu-64 to Ile-84, Ile-153 to Val-173, Pro-253 to Pro-273, and Val-275 to Met-295. The ABC transmembrane type-1 domain occupies Ile-28–Arg-310. The 237-residue stretch at Leu-342 to Met-578 folds into the ABC transporter domain. Gly-376–Ser-383 contributes to the ATP binding site.

This sequence belongs to the ABC transporter superfamily. Lipid exporter (TC 3.A.1.106) family. In terms of assembly, homodimer.

The protein localises to the cell inner membrane. It catalyses the reaction ATP + H2O + lipid A-core oligosaccharideSide 1 = ADP + phosphate + lipid A-core oligosaccharideSide 2.. In terms of biological role, involved in lipopolysaccharide (LPS) biosynthesis. Translocates lipid A-core from the inner to the outer leaflet of the inner membrane. Transmembrane domains (TMD) form a pore in the inner membrane and the ATP-binding domain (NBD) is responsible for energy generation. This chain is ATP-dependent lipid A-core flippase, found in Salmonella paratyphi A (strain ATCC 9150 / SARB42).